We begin with the raw amino-acid sequence, 743 residues long: Phosphoribosylformylglycinamidine synthase subunit PurL (743 aa).

His-50 is a catalytic residue. ATP is bound by residues Tyr-53 and Lys-92. Residue Glu-94 participates in Mg(2+) binding. Residues 95–98 (SHNH) and Arg-117 contribute to the substrate site. The active-site Proton acceptor is the His-96. Asp-118 contributes to the Mg(2+) binding site. Substrate is bound at residue Gln-241. Asp-269 contacts Mg(2+). 313–315 (ESQ) provides a ligand contact to substrate. ATP contacts are provided by Asp-494 and Gly-531. Asn-532 provides a ligand contact to Mg(2+). Ser-534 provides a ligand contact to substrate.

This sequence belongs to the FGAMS family. In terms of assembly, monomer. Part of the FGAM synthase complex composed of 1 PurL, 1 PurQ and 2 PurS subunits.

It localises to the cytoplasm. The enzyme catalyses N(2)-formyl-N(1)-(5-phospho-beta-D-ribosyl)glycinamide + L-glutamine + ATP + H2O = 2-formamido-N(1)-(5-O-phospho-beta-D-ribosyl)acetamidine + L-glutamate + ADP + phosphate + H(+). The protein operates within purine metabolism; IMP biosynthesis via de novo pathway; 5-amino-1-(5-phospho-D-ribosyl)imidazole from N(2)-formyl-N(1)-(5-phospho-D-ribosyl)glycinamide: step 1/2. Part of the phosphoribosylformylglycinamidine synthase complex involved in the purines biosynthetic pathway. Catalyzes the ATP-dependent conversion of formylglycinamide ribonucleotide (FGAR) and glutamine to yield formylglycinamidine ribonucleotide (FGAM) and glutamate. The FGAM synthase complex is composed of three subunits. PurQ produces an ammonia molecule by converting glutamine to glutamate. PurL transfers the ammonia molecule to FGAR to form FGAM in an ATP-dependent manner. PurS interacts with PurQ and PurL and is thought to assist in the transfer of the ammonia molecule from PurQ to PurL. The sequence is that of Phosphoribosylformylglycinamidine synthase subunit PurL from Sinorhizobium fredii (strain HH103).